Consider the following 329-residue polypeptide: DNA-directed RNA polymerase subunit alpha (329 aa).

Residues 1 to 231 are alpha N-terminal domain (alpha-NTD); sequence MQTTLLKPKT…EQLAVFAQLE (231 aa). Residues 249-329 form an alpha C-terminal domain (alpha-CTD) region; the sequence is FDPILLRPVD…SWPPAGLDKR (81 aa).

This sequence belongs to the RNA polymerase alpha chain family. In terms of assembly, homodimer. The RNAP catalytic core consists of 2 alpha, 1 beta, 1 beta' and 1 omega subunit. When a sigma factor is associated with the core the holoenzyme is formed, which can initiate transcription.

It catalyses the reaction RNA(n) + a ribonucleoside 5'-triphosphate = RNA(n+1) + diphosphate. In terms of biological role, DNA-dependent RNA polymerase catalyzes the transcription of DNA into RNA using the four ribonucleoside triphosphates as substrates. The chain is DNA-directed RNA polymerase subunit alpha from Variovorax paradoxus (strain S110).